Here is a 220-residue protein sequence, read N- to C-terminus: Probable chemoreceptor glutamine deamidase CheD (220 aa).

This sequence belongs to the CheD family.

It carries out the reaction L-glutaminyl-[protein] + H2O = L-glutamyl-[protein] + NH4(+). Its function is as follows. Probably deamidates glutamine residues to glutamate on methyl-accepting chemotaxis receptors (MCPs), playing an important role in chemotaxis. This Cupriavidus metallidurans (strain ATCC 43123 / DSM 2839 / NBRC 102507 / CH34) (Ralstonia metallidurans) protein is Probable chemoreceptor glutamine deamidase CheD.